The sequence spans 391 residues: Lysophosphatidylinositol acyltransferase 10 (391 aa).

A run of 5 helical transmembrane segments spans residues 10-30 (LLGWFFGLCILFSALFGNYII), 52-72 (AISYWMTIPMGLLEFLMGVRI), 97-119 (WMYMWCALYQINPWLITSNKISL), 323-343 (LTSLMFWTLVISFCSYHIFFV), and 347-367 (QLGFLYFFVISFYLSWRYGGI).

It belongs to the 1-acyl-sn-glycerol-3-phosphate acyltransferase family. As to expression, expressed in seam cells, vulval epithelial cells and the major epithelial syncytium hyp7, and in several head neurons including AIY interneurons.

Its subcellular location is the endoplasmic reticulum membrane. It catalyses the reaction a 2-acyl-sn-glycero-3-phospho-D-myo-inositol + an acyl-CoA = a 1,2-diacyl-sn-glycero-3-phospho-(1D-myo-inositol) + CoA. The catalysed reaction is a 2-acyl-sn-glycero-3-phospho-D-myo-inositol + octadecanoyl-CoA = 1-octadecanoyl-2-acyl-sn-glycero-3-phospho-1D-myo-inositol + CoA. It functions in the pathway phospholipid metabolism; phosphatidylinositol metabolism. In terms of biological role, acyltransferase required for the fatty acid remodeling of phosphatidylinositol (1,2-diacyl-sn-glycero-3-phosphoinositol or PI). Mediates the conversion of lysophosphatidylinositol (2-acylglycerophosphatidylinositol or LPI) into PI (LPIAT activity). Has preference for saturated and mono-unsaturated fatty acids as acyl donors and sn-2-acyl lysoPI (2-acyl-sn-glycero-3-phospho-D-myo-inositol) as acyl acceptor. Contributes to the asymmetric cell division of epithelial cells. Asymmetric cell division is the fundamental mechanism by which multicellular organisms generate cell diversity. In Caenorhabditis elegans, this protein is Lysophosphatidylinositol acyltransferase 10.